The following is a 1037-amino-acid chain: Nucleoporin NUP120 (1037 aa).

2 leucine-zipper regions span residues 131–152 and 290–311; these read LQLPLSFLFSSANTLNGEWFHL and LLPLENGLFQMGTLLVDSSGIL. Thr417 bears the Phosphothreonine mark.

In terms of assembly, component of the nuclear pore complex (NPC). NPC constitutes the exclusive means of nucleocytoplasmic transport. NPCs allow the passive diffusion of ions and small molecules and the active, nuclear transport receptor-mediated bidirectional transport of macromolecules such as proteins, RNAs, ribonucleoparticles (RNPs), and ribosomal subunits across the nuclear envelope. Due to its 8-fold rotational symmetry, all subunits are present with 8 copies or multiples thereof. NUP120 is part of the heptameric 0.5 MDa autoassembling NUP84 NPC subcomplex (NUP84, NUP85, NUP120, NUP133, NUP145C, SEC13 and SEH1).

It is found in the nucleus. The protein resides in the nuclear pore complex. The protein localises to the nucleus membrane. In terms of biological role, functions as a component of the nuclear pore complex (NPC). NPC components, collectively referred to as nucleoporins (NUPs), can play the role of both NPC structural components and of docking or interaction partners for transiently associated nuclear transport factors. NUP120 is involved in nuclear poly(A)+ RNA and pre-ribosome export, in GSP1 nuclear import, in NPC assembly and distribution, as well as in nuclear envelope organization. The protein is Nucleoporin NUP120 (NUP120) of Saccharomyces cerevisiae (strain ATCC 204508 / S288c) (Baker's yeast).